Here is a 204-residue protein sequence, read N- to C-terminus: Superoxide dismutase [Mn] (204 aa).

Position 27 (H27) interacts with Mn(2+). Residues T34 and T70 each carry the phosphothreonine modification. Mn(2+) is bound by residues H82, D164, and H168.

The protein belongs to the iron/manganese superoxide dismutase family. Homodimer. Mn(2+) serves as cofactor.

The catalysed reaction is 2 superoxide + 2 H(+) = H2O2 + O2. Its function is as follows. Destroys superoxide anion radicals which are normally produced within the cells and which are toxic to biological systems. This chain is Superoxide dismutase [Mn] (sodA), found in Bacillus caldotenax.